The primary structure comprises 88 residues: Small ribosomal subunit protein bS20 (88 aa).

2 disordered regions span residues 1–25 and 68–88; these read MPNIKSQIKRVKTNEKSRQRNKAVK and HKNQAANRKSAISKKLNSLAA.

Belongs to the bacterial ribosomal protein bS20 family.

Its function is as follows. Binds directly to 16S ribosomal RNA. This is Small ribosomal subunit protein bS20 from Cutibacterium acnes (strain DSM 16379 / KPA171202) (Propionibacterium acnes).